The primary structure comprises 293 residues: MEKCFNIIPSLLLISLLIKSSNAAGIAVYWGQNGNEGSLQDACNTNNYQFVNIAFLSTFGNGQNPQINLAGHCDPSTNGCTKFSPEIQACQAKGIKVLLSLGGGAGSYSLNSAEEATTLANYLWNNFLGGTSTSRPLGDAVLDGIDFDIESGGQHYDELAKALNGFSQQKVYLSAAPQCPYPDAHLDSAIQTGLFDYVWVQFYNNPQCQYSNGNINNLVNAWNQWTSSQAKQVFLGVPASDAAAPSGGLIPADVLTSQVLPAIKTSPKYGGVMIWDRFNDAQSGYSNAIKGSV.

Residues 1–22 (MEKCFNIIPSLLLISLLIKSSN) form the signal peptide. The GH18 domain maps to 24 to 293 (AGIAVYWGQN…GYSNAIKGSV (270 aa)). 2 disulfides stabilise this stretch: Cys43/Cys90 and Cys73/Cys80. The active-site Proton donor is Glu150. Residues Cys179 and Cys208 are joined by a disulfide bond.

The protein belongs to the glycosyl hydrolase 18 family. Chitinase class II subfamily.

It is found in the secreted. The protein localises to the extracellular space. It carries out the reaction Random endo-hydrolysis of N-acetyl-beta-D-glucosaminide (1-&gt;4)-beta-linkages in chitin and chitodextrins.. Its function is as follows. This protein functions as a defense against chitin containing fungal pathogens. The polypeptide is Acidic endochitinase (Cicer arietinum (Chickpea)).